The chain runs to 810 residues: Valine--tRNA ligase (810 aa).

Positions 45–55 (PTISGQLHIGH) match the 'HIGH' region motif. Residues 534–538 (KMSKS) carry the 'KMSKS' region motif. Residue lysine 537 participates in ATP binding.

It belongs to the class-I aminoacyl-tRNA synthetase family. ValS type 2 subfamily. As to quaternary structure, monomer.

It is found in the cytoplasm. It carries out the reaction tRNA(Val) + L-valine + ATP = L-valyl-tRNA(Val) + AMP + diphosphate. Catalyzes the attachment of valine to tRNA(Val). As ValRS can inadvertently accommodate and process structurally similar amino acids such as threonine, to avoid such errors, it has a 'posttransfer' editing activity that hydrolyzes mischarged Thr-tRNA(Val) in a tRNA-dependent manner. The sequence is that of Valine--tRNA ligase from Ehrlichia ruminantium (strain Welgevonden).